The following is a 2871-amino-acid chain: Fibrillin-1 (2871 aa).

The N-terminal stretch at 1–24 (MRRGRLLEIALGFTVLLASYTSHG) is a signal peptide. Positions 25 to 44 (ADANLEAGNVKETRASRAKR) are excised as a propeptide. The fibrillin unique N-terminal (FUN) domain stretch occupies residues 45 to 81 (RGGGGHDALKGPNVCGSRYNAYCCPGWKTLPGGNQCI). Residues 45–450 (RGGGGHDALK…PPRVLPVNVT (406 aa)) form an N-terminal domain region. 11 disulfides stabilise this stretch: Cys59-Cys68, Cys67-Cys80, Cys85-Cys94, Cys89-Cys100, Cys102-Cys111, Cys119-Cys129, Cys123-Cys134, Cys136-Cys145, Cys150-Cys160, Cys154-Cys166, and Cys168-Cys177. EGF-like domains lie at 81 to 112 (IVPICRHSCGDGFCSRPNMCTCPSGQIAPSCG), 115 to 146 (SIQHCNIRCMNGGSCSDDHCLCQKGYIGTHCG), and 147 to 178 (QPVCESGCLNGGRCVAPNRCACTYGFTGPQCE). The interaction with MFAP4 stretch occupies residues 119 to 329 (CNIRCMNGGS…YTSPDGTRCI (211 aa)). The region spanning 184–236 (GPCFTVISNQMCQGQLSGIVCTKTLCCATVGRAWGHPCEMCPAQPHPCRRGFI) is the TB 1 domain. Positions 195 to 221 (CQGQLSGIVCTKTLCCATVGRAWGHPC) are hybrid domain 1. The 42-residue stretch at 246–287 (DVDECQAIPGLCQGGNCINTVGSFECKCPAGHKLNEVSQKCE) folds into the EGF-like 4; calcium-binding domain. Cystine bridges form between Cys250–Cys262, Cys257–Cys271, Cys273–Cys286, Cys292–Cys304, Cys299–Cys313, and Cys315–Cys328. O-linked (Glc) serine glycosylation is present at Ser268. One can recognise an EGF-like 5; calcium-binding domain in the interval 288–329 (DIDECSTIPGICEGGECTNTVSSYFCKCPPGFYTSPDGTRCI). A TB 2 domain is found at 334–389 (GYCYTALTNGRCSNQLPQSITKMQCCCDAGRCWSPGVTVAPEMCPIRATEDFNKLC). N-linked (GlcNAc...) asparagine glycosylation occurs at Asn448. The EGF-like 6 domain occupies 449–489 (VTDYCQLVRYLCQNGRCIPTPGSYRCECNKGFQLDLRGECI). 15 disulfide bridges follow: Cys453/Cys465, Cys460/Cys474, Cys476/Cys488, Cys494/Cys504, Cys499/Cys513, Cys515/Cys528, Cys534/Cys546, Cys541/Cys555, Cys557/Cys570, Cys576/Cys587, Cys582/Cys596, Cys598/Cys611, Cys617/Cys628, Cys623/Cys637, and Cys639/Cys652. Residue Ser471 is glycosylated (O-linked (Glc) serine). Positions 490–529 (DVDECEKNPCAGGECINNQGSYTCQCRAGYQSTLTRTECR) constitute an EGF-like 7; calcium-binding domain. O-linked (Glc) serine glycosylation is present at Ser510. Positions 530 to 571 (DIDECLQNGRICNNGRCINTDGSFHCVCNAGFHVTRDGKNCE) constitute an EGF-like 8; calcium-binding domain. Ser552 carries O-linked (Glc) serine glycosylation. An EGF-like 9; calcium-binding domain is found at 572-612 (DMDECSIRNMCLNGMCINEDGSFKCICKPGFQLASDGRYCK). An O-linked (Glc) serine glycan is attached at Ser593. The EGF-like 10; calcium-binding domain occupies 613–653 (DINECETPGICMNGRCVNTDGSYRCECFPGLAVGLDGRVCV). The O-linked (Glc) serine glycan is linked to Ser634. Positions 659-711 (STCYGGYKRGQCIKPLFGAVTKSECCCASTEYAFGEPCQPCPAQNSAEYQALC) constitute a TB 3 domain. The EGF-like 11; calcium-binding domain maps to 723–764 (DINECALDPDICPNGICENLRGTYKCICNSGYEVDSTGKNCV). Intrachain disulfides connect Cys727-Cys739, Cys734-Cys748, Cys750-Cys763, Cys769-Cys781, Cys776-Cys790, Cys792-Cys805, Cys811-Cys821, Cys816-Cys830, Cys832-Cys845, Cys853-Cys875, Cys862-Cys887, Cys876-Cys890, Cys896-Cys908, Cys914-Cys926, Cys921-Cys935, and Cys937-Cys950. Residues 765-806 (DINECVLNSLLCDNGQCRNTPGSFVCTCPKGFIYKPDLKTCE) form the EGF-like 12; calcium-binding domain. An O-linked (Glc) serine glycan is attached at Ser787. Residues 807 to 846 (DIDECESSPCINGVCKNSPGSFICECSSESTLDPTKTICI) enclose the EGF-like 13; calcium-binding domain. A glycan (O-linked (Glc) serine) is linked at Ser827. The region spanning 851 to 902 (GTCWQTVIDGRCEININGATLKSQCCSSLGAAWGSPCTLCQVDPICGKGYSR) is the TB 4 domain. The interval 862 to 887 (CEININGATLKSQCCSSLGAAWGSPC) is hybrid domain 2. The EGF-like 14; calcium-binding domain occupies 910–951 (DIDECEVFPGVCKNGLCVNTRGSFKCQCPSGMTLDATGRICL). The 53-residue stretch at 956-1008 (ETCFLRYEDEECTLPIAGRHRMDACCCSVGAAWGTEECEECPMRNTPEYEELC) folds into the TB 5 domain. Residues 1028–1069 (DINECKMIPSLCTHGKCRNTIGSFKCRCDSGFALDSEERNCT) enclose the EGF-like 15; calcium-binding domain. Disulfide bonds link Cys1032/Cys1044, Cys1039/Cys1053, Cys1055/Cys1068, Cys1074/Cys1086, Cys1081/Cys1095, Cys1097/Cys1111, Cys1117/Cys1129, Cys1124/Cys1138, Cys1140/Cys1153, Cys1159/Cys1171, Cys1166/Cys1180, Cys1182/Cys1195, Cys1201/Cys1212, Cys1208/Cys1221, Cys1223/Cys1236, Cys1242/Cys1254, Cys1249/Cys1263, Cys1265/Cys1278, Cys1284/Cys1296, Cys1291/Cys1305, Cys1307/Cys1320, Cys1326/Cys1339, Cys1333/Cys1348, Cys1350/Cys1361, Cys1367/Cys1380, Cys1374/Cys1389, Cys1391/Cys1402, Cys1408/Cys1420, Cys1415/Cys1429, Cys1431/Cys1444, Cys1450/Cys1461, Cys1456/Cys1470, Cys1472/Cys1485, Cys1491/Cys1502, Cys1497/Cys1511, Cys1513/Cys1526, Cys1534/Cys1562, Cys1549/Cys1574, Cys1563/Cys1577, Cys1564/Cys1589, Cys1610/Cys1622, Cys1617/Cys1631, Cys1633/Cys1646, Cys1652/Cys1663, Cys1658/Cys1672, and Cys1674/Cys1687. An O-linked (Glc) serine glycan is attached at Ser1050. The N-linked (GlcNAc...) asparagine glycan is linked to Asn1067. Residues 1070–1112 (DIDECRISPDLCGRGQCVNTPGDFECKCDEGYESGFMMMKNCM) enclose the EGF-like 16; calcium-binding domain. An EGF-like 17; calcium-binding domain is found at 1113-1154 (DIDECQRDPLLCRGGVCHNTEGSYRCECPPGHQLSPNISACI). O-linked (Glc) serine glycosylation is present at Ser1135. Residue Asn1149 is glycosylated (N-linked (GlcNAc...) asparagine). Residues 1155-1196 (DINECELSAHLCPNGRCVNLIGKYQCACNPGYHSTPDRLFCV) enclose the EGF-like 18; calcium-binding domain. Residues 1197–1237 (DIDECSIMNGGCETFCTNSEGSYECSCQPGFALMPDQRSCT) enclose the EGF-like 19; calcium-binding domain. A glycan (O-linked (Glc) serine) is linked at Ser1218. The EGF-like 20; calcium-binding domain maps to 1238–1279 (DIDECEDNPNICDGGQCTNIPGEYRCLCYDGFMASEDMKTCV). The 42-residue stretch at 1280–1321 (DVNECDLNPNICLSGTCENTKGSFICHCDMGYSGKKGKTGCT) folds into the EGF-like 21; calcium-binding domain. Ser1302 is a glycosylation site (O-linked (Glc) serine). Residues 1322 to 1362 (DINECEIGAHNCGKHAVCTNTAGSFKCSCSPGWIGDGIKCT) enclose the EGF-like 22; calcium-binding domain. The O-linked (Glc) serine glycan is linked to Ser1345. The region spanning 1363-1403 (DLDECSNGTHMCSQHADCKNTMGSYRCLCKEGYTGDGFTCT) is the EGF-like 23; calcium-binding domain. Asn1369 is a glycosylation site (N-linked (GlcNAc...) asparagine). A glycan (O-linked (Glc) serine) is linked at Ser1386. The EGF-like 24; calcium-binding domain maps to 1404–1445 (DLDECSENLNLCGNGQCLNAPGGYRCECDMGFVPSADGKACE). One can recognise an EGF-like 25; calcium-binding domain in the interval 1446–1486 (DIDECSLPNICVFGTCHNLPGLFRCECEIGYELDRSGGNCT). A glycan (N-linked (GlcNAc...) asparagine) is linked at Asn1484. In terms of domain architecture, EGF-like 26; calcium-binding spans 1487–1527 (DVNECLDPTTCISGNCVNTPGSYICDCPPDFELNPTRVGCV). The O-linked (Glc) serine glycan is linked to Ser1508. The tract at residues 1528–2731 (DTRSGNCYLD…GYPKRGRKRR (1204 aa)) is C-terminal domain. A TB 6 domain is found at 1532–1589 (GNCYLDIRPRGDNGDTACSNEIGVGVSKASCCCSLGKAWGTPCEMCPAVNTSEYKILC). The Cell attachment site motif lies at 1541–1543 (RGD). Residue Asn1581 is glycosylated (N-linked (GlcNAc...) asparagine). In terms of domain architecture, EGF-like 27; calcium-binding spans 1606–1647 (DIDECQELPGLCQGGKCINTFGSFQCRCPTGYYLNEDTRVCD). An O-linked (Glc) serine glycan is attached at Ser1628. In terms of domain architecture, EGF-like 28; calcium-binding spans 1648 to 1688 (DVNECETPGICGPGTCYNTVGNYTCICPPDYMQVNGGNNCM). Asn1669 is a glycosylation site (N-linked (GlcNAc...) asparagine). A TB 7 domain is found at 1693–1748 (SLCYRNYYADNQTCDGELLFNMTKKMCCCSYNIGRAWNKPCEQCPIPSTDEFATLC). Residues Asn1703 and Asn1713 are each glycosylated (N-linked (GlcNAc...) asparagine). Residues 1766-1807 (DIDECREIPGVCENGVCINMVGSFRCECPVGFFYNDKLLVCE) enclose the EGF-like 29; calcium-binding domain. Disulfide bonds link Cys1770-Cys1782, Cys1777-Cys1791, Cys1793-Cys1806, Cys1812-Cys1824, Cys1818-Cys1833, Cys1835-Cys1847, Cys1853-Cys1865, Cys1860-Cys1874, Cys1876-Cys1889, Cys1895-Cys1905, Cys1900-Cys1914, Cys1916-Cys1928, Cys1934-Cys1947, Cys1942-Cys1956, Cys1958-Cys1971, Cys1977-Cys1989, Cys1984-Cys1998, Cys2000-Cys2011, Cys2017-Cys2029, Cys2024-Cys2038, Cys2040-Cys2053, Cys2061-Cys2083, Cys2070-Cys2096, Cys2084-Cys2099, Cys2085-Cys2111, Cys2131-Cys2142, Cys2137-Cys2151, Cys2153-Cys2164, Cys2170-Cys2181, Cys2176-Cys2190, Cys2192-Cys2204, Cys2210-Cys2221, Cys2217-Cys2230, Cys2232-Cys2245, Cys2251-Cys2265, Cys2258-Cys2274, Cys2276-Cys2289, Cys2295-Cys2307, Cys2302-Cys2316, and Cys2318-Cys2331. The region spanning 1808 to 1848 (DIDECQNGPVCQRNAECINTAGSYRCDCKPGYRFTSTGQCN) is the EGF-like 30; calcium-binding domain. Ser1830 carries O-linked (Glc) serine glycosylation. Residues 1849–1890 (DRNECQEIPNICSHGQCIDTVGSFYCLCHTGFKTNDDQTMCL) enclose the EGF-like 31; calcium-binding domain. Ser1871 is a glycosylation site (O-linked (Glc) serine). One can recognise an EGF-like 32; calcium-binding domain in the interval 1891-1929 (DINECERDACGNGTCRNTIGSFNCRCNHGFILSHNNDCI). N-linked (GlcNAc...) asparagine glycosylation is present at Asn1902. O-linked (Glc) serine glycosylation occurs at Ser1911. In terms of domain architecture, EGF-like 33; calcium-binding spans 1930–1972 (DVDECASGNGNLCRNGQCINTVGSFQCQCNEGYEVAPDGRTCV). O-linked (Glc) serine glycosylation is present at Ser1953. The region spanning 1973–2012 (DINECLLEPRKCAPGTCQNLDGSYRCICPPGYSLQNEKCE) is the EGF-like 34; calcium-binding domain. The EGF-like 35; calcium-binding domain occupies 2013–2054 (DIDECVEEPEICALGTCSNTEGSFKCLCPEGFSLSSSGRRCQ). The O-linked (Glc) serine glycan is linked to Ser2035. The region spanning 2059-2111 (SYCYAKFEGGKCSSPKSRNHSKQECCCALKGEGWGDPCELCPTEPDEAFRQIC) is the TB 8 domain. N-linked (GlcNAc...) asparagine glycosylation occurs at Asn2077. Positions 2127–2165 (DMDECKEPDVCKHGQCINTDGSYRCECPFGYILAGNECV) constitute an EGF-like 36; calcium-binding domain. Ser2148 carries O-linked (Glc) serine glycosylation. An EGF-like 37; calcium-binding domain is found at 2166–2205 (DTDECSVGNPCGNGTCKNVIGGFECTCEEGFEPGPMMTCE). A glycan (N-linked (GlcNAc...) asparagine) is linked at Asn2178. In terms of domain architecture, EGF-like 38; calcium-binding spans 2206 to 2246 (DINECAQNPLLCAFRCVNTYGSYECKCPVGYVLREDRRMCK). O-linked (Glc) serine glycosylation is present at Ser2227. In terms of domain architecture, EGF-like 39; calcium-binding spans 2247-2290 (DEDECEEGKHDCTEKQMECKNLIGTYMCICGPGYQRRPDGEGCV). Residues 2291 to 2332 (DENECQTKPGICENGRCLNTRGSYTCECNDGFTASPNQDECL) enclose the EGF-like 40; calcium-binding domain. Ser2313 carries an O-linked (Glc) serine glycan. The TB 9 domain maps to 2337–2390 (GYCFTEVLQNMCQIGSSNRNPVTKSECCCDGGRGWGPHCEICPFQGTVAFKKLC). The EGF-like 41; calcium-binding domain occupies 2402–2443 (DIDECKVIHDVCRNGECVNDRGSYHCICKTGYTPDITGTSCV). Disulfide bonds link Cys2406-Cys2418, Cys2413-Cys2427, Cys2429-Cys2442, Cys2448-Cys2459, Cys2455-Cys2468, Cys2470-Cys2483, Cys2489-Cys2500, Cys2496-Cys2509, Cys2511-Cys2522, Cys2528-Cys2541, Cys2535-Cys2550, Cys2552-Cys2565, Cys2571-Cys2581, Cys2577-Cys2590, Cys2592-Cys2605, Cys2611-Cys2622, Cys2617-Cys2631, Cys2633-Cys2646, Cys2652-Cys2663, Cys2659-Cys2672, and Cys2674-Cys2686. The region spanning 2444 to 2484 (DLNECNQAPKPCNFICKNTEGSYQCSCPKGYILQEDGRSCK) is the EGF-like 42; calcium-binding domain. A glycan (O-linked (Glc) serine) is linked at Ser2465. The EGF-like 43; calcium-binding domain maps to 2485-2523 (DLDECATKQHNCQFLCVNTIGGFTCKCPPGFTQHHTSCI). The region spanning 2524–2566 (DNNECTSDINLCGSKGICQNTPGSFTCECQRGFSLDQTGSSCE) is the EGF-like 44; calcium-binding domain. A glycan (O-linked (Glc) serine) is linked at Ser2547. Residues 2567-2606 (DVDECEGNHRCQHGCQNIIGGYRCSCPQGYLQHYQWNQCV) form the EGF-like 45; calcium-binding domain. The EGF-like 46; calcium-binding domain occupies 2607 to 2647 (DENECLSAHICGGASCHNTLGSYKCMCPAGFQYEQFSGGCQ). O-linked (Glc) serine glycosylation occurs at Ser2628. The EGF-like 47; calcium-binding domain maps to 2648–2687 (DINECGSAQAPCSYGCSNTEGGYLCGCPPGYFRIGQGHCV). At Ser2702 the chain carries Phosphoserine; by FAM20C. Phosphoserine is present on Ser2709. The disordered stretch occupies residues 2726–2746 (RGRKRRSTNETDASNIEDQSE). An N-linked (GlcNAc...) asparagine glycan is attached at Asn2734. Polar residues predominate over residues 2735 to 2746 (ETDASNIEDQSE). Residues Asn2750 and Asn2767 are each glycosylated (N-linked (GlcNAc...) asparagine).

The protein belongs to the fibrillin family. Interacts with COL16A1. Interacts with integrin alpha-V/beta-3. Interacts with ADAMTS10; this interaction promotes microfibril assembly. Interacts with THSD4; this interaction promotes fibril formation. Interacts (via N-terminal domain) with FBLN2 and FBLN5. Interacts with ELN. Forms a ternary complex with ELN and FBLN2 or FBLN5 and a significant interaction with ELN seen only in the presence of FBLN2 or FBLN5. Interacts (via N-terminal domain) with LTBP2 (via C-terminal domain) in a Ca(+2)-dependent manner. Interacts (via N-terminal domain) with LTBP1 (via C-terminal domain). Interacts with integrins ITGA5:ITGB1, ITGAV:ITGB3 and ITGAV:ITGB6. Interacts (via N-terminal domain) with BMP2, BMP4, BMP7, BMP10 and GDF5. Interacts (via N-terminal domain) with MFAP2 and MFAP5. Interacts with ADAMTSL5. Interacts with MFAP4. Interacts (via N-terminal domain) with TNFSF11 in a Ca(+2)-dependent manner. Interacts (via N-terminal domain) with EFEMP2; this interaction inhibits EFEMP2 binding to LOX and ELN. In terms of processing, cleavage of N- and C-terminus by furin is required for incorporation into the extracellular matrix and assembly into microfibrils. The C-terminus, which corresponds to the Asprosin chain, was initially thought to constitute a propeptide. Fibrillin-1 and Asprosin chains are still linked together during the secretion from cells, but are subsequently separated by furin, an essential step for incorporation of Fibrillin-1 into the nascent microfibrils. Post-translationally, forms intermolecular disulfide bonds either with other fibrillin-1 molecules or with other components of the microfibrils. O-glycosylated on serine residues by POGLUT2 and POGLUT3 which is necessary for efficient protein secretion.

It localises to the secreted. The protein localises to the extracellular space. The protein resides in the extracellular matrix. Functionally, structural component of the 10-12 nm diameter microfibrils of the extracellular matrix, which conveys both structural and regulatory properties to load-bearing connective tissues. Fibrillin-1-containing microfibrils provide long-term force bearing structural support. In tissues such as the lung, blood vessels and skin, microfibrils form the periphery of the elastic fiber, acting as a scaffold for the deposition of elastin. In addition, microfibrils can occur as elastin-independent networks in tissues such as the ciliary zonule, tendon, cornea and glomerulus where they provide tensile strength and have anchoring roles. Fibrillin-1 also plays a key role in tissue homeostasis through specific interactions with growth factors, such as the bone morphogenetic proteins (BMPs), growth and differentiation factors (GDFs) and latent transforming growth factor-beta-binding proteins (LTBPs), cell-surface integrins and other extracellular matrix protein and proteoglycan components. Regulates osteoblast maturation by controlling TGF-beta bioavailability and calibrating TGF-beta and BMP levels, respectively. Negatively regulates osteoclastogenesis by binding and sequestering an osteoclast differentiation and activation factor TNFSF11. This leads to disruption of TNFSF11-induced Ca(2+) signaling and impairment of TNFSF11-mediated nuclear translocation and activation of transcription factor NFATC1 which regulates genes important for osteoclast differentiation and function. Mediates cell adhesion via its binding to cell surface receptors integrins ITGAV:ITGB3 and ITGA5:ITGB1. Binds heparin and this interaction has an important role in the assembly of microfibrils. Adipokine secreted by white adipose tissue that plays an important regulatory role in the glucose metabolism of liver, muscle and pancreas. Hormone that targets the liver in response to fasting to increase plasma glucose levels. Binds the olfactory receptor OR4M1 at the surface of hepatocytes and promotes hepatocyte glucose release by activating the protein kinase A activity in the liver, resulting in rapid glucose release into the circulation. May act as a regulator of adaptive thermogenesis by inhibiting browning and energy consumption, while increasing lipid deposition in white adipose tissue. Also acts as an orexigenic hormone that increases appetite: crosses the blood brain barrier and exerts effects on the hypothalamus. In the arcuate nucleus of the hypothalamus, asprosin directly activates orexigenic AgRP neurons and indirectly inhibits anorexigenic POMC neurons, resulting in appetite stimulation. Activates orexigenic AgRP neurons via binding to the olfactory receptor OR4M1. May also play a role in sperm motility in testis via interaction with OR4M1 receptor. The protein is Fibrillin-1 of Homo sapiens (Human).